The sequence spans 183 residues: Endoribonuclease YbeY (183 aa).

3 residues coordinate Zn(2+): H118, H122, and H128. The interval 156–183 is disordered; it reads EREQAQRSADSAVLGAVGLEEQDGPGTH.

This sequence belongs to the endoribonuclease YbeY family. It depends on Zn(2+) as a cofactor.

It is found in the cytoplasm. Single strand-specific metallo-endoribonuclease involved in late-stage 70S ribosome quality control and in maturation of the 3' terminus of the 16S rRNA. This is Endoribonuclease YbeY from Saccharopolyspora erythraea (strain ATCC 11635 / DSM 40517 / JCM 4748 / NBRC 13426 / NCIMB 8594 / NRRL 2338).